The following is a 345-amino-acid chain: Phosphoribosylformylglycinamidine cyclo-ligase (345 aa).

It belongs to the AIR synthase family.

Its subcellular location is the cytoplasm. The enzyme catalyses 2-formamido-N(1)-(5-O-phospho-beta-D-ribosyl)acetamidine + ATP = 5-amino-1-(5-phospho-beta-D-ribosyl)imidazole + ADP + phosphate + H(+). It participates in purine metabolism; IMP biosynthesis via de novo pathway; 5-amino-1-(5-phospho-D-ribosyl)imidazole from N(2)-formyl-N(1)-(5-phospho-D-ribosyl)glycinamide: step 2/2. This is Phosphoribosylformylglycinamidine cyclo-ligase from Mannheimia succiniciproducens (strain KCTC 0769BP / MBEL55E).